A 78-amino-acid polypeptide reads, in one-letter code: Acyl carrier protein (78 aa).

The Carrier domain occupies 2-77; it reads STIEERVKKI…AAIDYIEAAN (76 aa). Serine 37 carries the O-(pantetheine 4'-phosphoryl)serine modification.

It belongs to the acyl carrier protein (ACP) family. 4'-phosphopantetheine is transferred from CoA to a specific serine of apo-ACP by AcpS. This modification is essential for activity because fatty acids are bound in thioester linkage to the sulfhydryl of the prosthetic group.

Its subcellular location is the cytoplasm. It participates in lipid metabolism; fatty acid biosynthesis. Carrier of the growing fatty acid chain in fatty acid biosynthesis. The sequence is that of Acyl carrier protein from Edwardsiella ictaluri (strain 93-146).